A 181-amino-acid polypeptide reads, in one-letter code: UPF0301 protein COXBURSA331_A2219 (181 aa).

Belongs to the UPF0301 (AlgH) family.

The protein is UPF0301 protein COXBURSA331_A2219 of Coxiella burnetii (strain RSA 331 / Henzerling II).